A 446-amino-acid chain; its full sequence is ATP synthase subunit b-delta (446 aa).

An ATP synthase subunit b region spans residues M1–L168. A helical transmembrane segment spans residues F4–P24. Positions M169–D446 are ATP synthase subunit delta.

The protein in the N-terminal section; belongs to the ATPase B chain family. In the C-terminal section; belongs to the ATPase delta chain family. In terms of assembly, F-type ATPases have 2 components, F(1) - the catalytic core - and F(0) - the membrane proton channel. F(1) has five subunits: alpha(3), beta(3), gamma(1), delta(1), epsilon(1). F(0) has three main subunits: a(1), b(2) and c(10-14). The alpha and beta chains form an alternating ring which encloses part of the gamma chain. F(1) is attached to F(0) by a central stalk formed by the gamma and epsilon chains, while a peripheral stalk is formed by the delta and b chains.

Its subcellular location is the cell membrane. Its function is as follows. F(1)F(0) ATP synthase produces ATP from ADP in the presence of a proton or sodium gradient. F-type ATPases consist of two structural domains, F(1) containing the extramembraneous catalytic core and F(0) containing the membrane proton channel, linked together by a central stalk and a peripheral stalk. During catalysis, ATP synthesis in the catalytic domain of F(1) is coupled via a rotary mechanism of the central stalk subunits to proton translocation. This fusion protein includes a component of the F(0) channel (subunit b) and of the F(1) subunit (subunit delta). Two copies of subunit b and one of delta together form the peripheral 'stator' stalk which links F(1) to F(0). The sequence is that of ATP synthase subunit b-delta (atpFH) from Mycobacterium avium (strain 104).